The sequence spans 119 residues: Large ribosomal subunit protein bL19 (119 aa).

The protein belongs to the bacterial ribosomal protein bL19 family.

Functionally, this protein is located at the 30S-50S ribosomal subunit interface and may play a role in the structure and function of the aminoacyl-tRNA binding site. The polypeptide is Large ribosomal subunit protein bL19 (Limosilactobacillus fermentum (strain NBRC 3956 / LMG 18251) (Lactobacillus fermentum)).